Consider the following 188-residue polypeptide: Elongation factor P (188 aa).

This sequence belongs to the elongation factor P family.

It localises to the cytoplasm. Its pathway is protein biosynthesis; polypeptide chain elongation. In terms of biological role, involved in peptide bond synthesis. Stimulates efficient translation and peptide-bond synthesis on native or reconstituted 70S ribosomes in vitro. Probably functions indirectly by altering the affinity of the ribosome for aminoacyl-tRNA, thus increasing their reactivity as acceptors for peptidyl transferase. The polypeptide is Elongation factor P (Mycoplasma mobile (strain ATCC 43663 / 163K / NCTC 11711) (Mesomycoplasma mobile)).